Reading from the N-terminus, the 140-residue chain is Ribonuclease P protein component (140 aa).

The protein belongs to the RnpA family. As to quaternary structure, consists of a catalytic RNA component (M1 or rnpB) and a protein subunit.

It catalyses the reaction Endonucleolytic cleavage of RNA, removing 5'-extranucleotides from tRNA precursor.. Its function is as follows. RNaseP catalyzes the removal of the 5'-leader sequence from pre-tRNA to produce the mature 5'-terminus. It can also cleave other RNA substrates such as 4.5S RNA. The protein component plays an auxiliary but essential role in vivo by binding to the 5'-leader sequence and broadening the substrate specificity of the ribozyme. The polypeptide is Ribonuclease P protein component (Nostoc sp. (strain PCC 7120 / SAG 25.82 / UTEX 2576)).